Here is a 146-residue protein sequence, read N- to C-terminus: Transcriptional regulator MraZ (146 aa).

SpoVT-AbrB domains follow at residues 4–46 and 75–118; these read TVFR…SQTE and TVKV…PEQR.

The protein belongs to the MraZ family. Forms oligomers.

The protein resides in the cytoplasm. It localises to the nucleoid. The chain is Transcriptional regulator MraZ from Mesomycoplasma hyopneumoniae (strain 232) (Mycoplasma hyopneumoniae).